Reading from the N-terminus, the 132-residue chain is Small ribosomal subunit protein uS9 (132 aa).

This sequence belongs to the universal ribosomal protein uS9 family.

The protein is Small ribosomal subunit protein uS9 of Leptospira interrogans serogroup Icterohaemorrhagiae serovar copenhageni (strain Fiocruz L1-130).